The following is a 378-amino-acid chain: uncharacterized protein (378 aa).

It belongs to the IIV-6 329R family.

This is an uncharacterized protein from Acheta domesticus (House cricket).